The following is a 1235-amino-acid chain: ATP-dependent helicase/nuclease subunit A (1235 aa).

The region spanning 12–482 (SLWTDDQWKA…IDLSQNFRSR (471 aa)) is the UvrD-like helicase ATP-binding domain. 33–40 (AAAGSGKT) lines the ATP pocket. The UvrD-like helicase C-terminal domain occupies 509 to 800 (AAELTLGANF…RMMTIHASKG (292 aa)).

Belongs to the helicase family. AddA subfamily. In terms of assembly, heterodimer of AddA and AddB/RexB. Mg(2+) is required as a cofactor.

The catalysed reaction is Couples ATP hydrolysis with the unwinding of duplex DNA by translocating in the 3'-5' direction.. It carries out the reaction ATP + H2O = ADP + phosphate + H(+). Functionally, the heterodimer acts as both an ATP-dependent DNA helicase and an ATP-dependent, dual-direction single-stranded exonuclease. Recognizes the chi site generating a DNA molecule suitable for the initiation of homologous recombination. The AddA nuclease domain is required for chi fragment generation; this subunit has the helicase and 3' -&gt; 5' nuclease activities. This Listeria monocytogenes serovar 1/2a (strain ATCC BAA-679 / EGD-e) protein is ATP-dependent helicase/nuclease subunit A.